Consider the following 409-residue polypeptide: Pentatricopeptide repeat-containing protein At1g31790 (409 aa).

9 PPR repeats span residues 87 to 121 (NEDIYSCLAKESARENDQRGAHELQVHIMKSSIRP), 122 to 152 (TITFINRLLLMHVSCGRLDITRQMFDRMPHR), 153 to 187 (DFHSWAIVFLGCIEMGDYEDAAFLFVSMLKHSQKG), 192 to 226 (PSWILGCVLKACAMIRDFELGKQVHALCHKLGFID), 229 to 259 (DSYLSGSLIRFYGEFRCLEDANLVLHQLSNA), 260 to 294 (NTVAWAAKVTNDYREGEFQEVIRDFIEMGNHGIKK), 295 to 330 (NVSVFSNVLKACSWVSDGGRSGQQVHANAIKLGFES), 331 to 361 (DCLIRCRLIEMYGKYGKVKDAEKVFKSSKDE), and 363 to 397 (SVSCWNAMVASYMQNGIYIEAIKLLYQMKATGIKA).

The protein belongs to the PPR family. PCMP-A subfamily.

In Arabidopsis thaliana (Mouse-ear cress), this protein is Pentatricopeptide repeat-containing protein At1g31790 (PCMP-A1).